A 311-amino-acid polypeptide reads, in one-letter code: 4-diphosphocytidyl-2-C-methyl-D-erythritol kinase (311 aa).

Lys13 is an active-site residue. 114 to 124 is a binding site for ATP; sequence PVAGGMAGGSA. Asp156 is an active-site residue.

This sequence belongs to the GHMP kinase family. IspE subfamily.

The enzyme catalyses 4-CDP-2-C-methyl-D-erythritol + ATP = 4-CDP-2-C-methyl-D-erythritol 2-phosphate + ADP + H(+). Its pathway is isoprenoid biosynthesis; isopentenyl diphosphate biosynthesis via DXP pathway; isopentenyl diphosphate from 1-deoxy-D-xylulose 5-phosphate: step 3/6. Catalyzes the phosphorylation of the position 2 hydroxy group of 4-diphosphocytidyl-2C-methyl-D-erythritol. This chain is 4-diphosphocytidyl-2-C-methyl-D-erythritol kinase, found in Corynebacterium diphtheriae (strain ATCC 700971 / NCTC 13129 / Biotype gravis).